The sequence spans 420 residues: PHO85 cyclin-6 (420 aa).

Disordered stretches follow at residues 1–82, 134–155, and 268–321; these read MSIK…ESSF, QGTH…DTSN, and VTTT…GVQR. Over residues 7 to 22 the composition is skewed to low complexity; that stretch reads SPSSTNASSSPKSTYS. S61 carries the phosphoserine modification. Residues 134 to 143 are compositionally biased toward polar residues; the sequence is QGTHTVQSST. Residues 277–296 are compositionally biased toward basic and acidic residues; sequence AKHESPSNESSLDKANRGAD. A phosphoserine mark is found at S281 and S312. The segment covering 307–316 has biased composition (acidic residues); that stretch reads NENDDSDDEN. T317 is modified (phosphothreonine).

This sequence belongs to the cyclin family. PHO80 subfamily. In terms of assembly, forms a cyclin-CDK complex with PHO85. Interacts with the substrate protein YJL084C. Interacts with elongin-C, which stabilizes PCL6. Interacts with the CDK inhibitor (CKI) PHO81.

It is found in the cytoplasm. The protein localises to the nucleus. Cyclin partner of the cyclin-dependent kinase (CDK) PHO85. Together with cyclin PCL7, controls glycogen phosphorylase and glycogen synthase activities in response to nutrient availablility. The PCL6-PHO85 cyclin-CDK holoenzyme has GLC8 kinase activity and phosphorylates and inactivates the phosphatase PP1-2 inhibitor GLC8, causing activation of PP1-2, which then dephosphorylates and activates glycogen phosphorylase. PCL6-PHO85 also phosphorylates YJL084C. This Saccharomyces cerevisiae (strain ATCC 204508 / S288c) (Baker's yeast) protein is PHO85 cyclin-6 (PCL6).